The following is a 647-amino-acid chain: Auxin efflux carrier component 2 (647 aa).

The Extracellular portion of the chain corresponds to 1-7 (MITGKDM). The chain crosses the membrane as a helical span at residues 8–28 (YDVLAAMVPLYVAMILAYGSV). Topologically, residues 29–38 (RWWGIFTPDQ) are cytoplasmic. Residues 39 to 59 (CSGINRFVAVFAVPLLSFHFI) form a helical membrane-spanning segment. Valine 51 is a binding site for (indol-3-yl)acetate. Residues 60–68 (SSNDPYAMN) lie on the Extracellular side of the membrane. Residues 69–89 (YHFLAADSLQKVVILAALFLW) traverse the membrane as a helical segment. At 90–100 (QAFSRRGSLEW) the chain is on the cytoplasmic side. The helical transmembrane segment at 101–121 (MITLFSLSTLPNTLVMGIPLL) threads the bilayer. (indol-3-yl)acetate is bound by residues asparagine 112 and leucine 114. The Extracellular portion of the chain corresponds to 122–131 (RAMYGDFSGN). Residues 132-152 (LMVQIVVLQSIIWYTLMLFLF) traverse the membrane as a helical segment. (indol-3-yl)acetate is bound at residue tyrosine 145. The Cytoplasmic segment spans residues 153–507 (EFRGAKLLIS…LIRNPNTYSS (355 aa)). Residues serine 237, serine 258, and serine 310 each carry the phosphoserine modification. The tract at residues 339–380 (SVPSYPPPNPMFTGSTSGASGVKKKESGGGGSGGGVGVGGQN) is disordered. Threonine 354 carries the phosphothreonine modification. A compositionally biased stretch (gly residues) spans 366–378 (GGGGSGGGVGVGG). Serine 393 is subject to Phosphoserine. Disordered regions lie at residues 397–420 (EANA…KVSI) and 440–481 (PGRK…QQMP). A helical transmembrane segment spans residues 508–528 (LFGLAWSLVSFKWNIKMPTIM). Residues 529–531 (SGS) are Extracellular-facing. A helical transmembrane segment spans residues 532-552 (ISILSDAGLGMAMFSLGLFMA). Residues 553–568 (LQPKIIACGKSVAGFA) lie on the Cytoplasmic side of the membrane. The helical transmembrane segment at 569–589 (MAVRFLTGPAVIAATSIAIGI) threads the bilayer. Residues 590 to 592 (RGD) lie on the Extracellular side of the membrane. The chain crosses the membrane as a helical span at residues 593-613 (LLHIAIVQAALPQGIVPFVFA). (indol-3-yl)acetate contacts are provided by isoleucine 607 and valine 608. The Cytoplasmic portion of the chain corresponds to 614–626 (KEYNVHPDILSTA). A helical transmembrane segment spans residues 627 to 647 (VIFGMLVALPVTVLYYVLLGL).

The protein belongs to the auxin efflux carrier (TC 2.A.69.1) family. In terms of assembly, homodimer. Interacts with FYPP1 and FYPP3. Component of a complex made of PINs (e.g. PIN1 and PIN2), MAB4/MELs (e.g. NPY1/MAB4 and NPY5/MEL1) and AGC kinases (e.g. D6PK and PID) at the plasma membrane. Binds directly to NPY1/MAB4, NPY5/MEL1 and PID. As to expression, root-specific. Localized to the cortex, epidermis and lateral root cap, predominantly at the upper side of cells.

It is found in the cell membrane. Acts as a component of the auxin efflux carrier. Seems to be involved in the root-specific auxin transport, and mediates the root gravitropism. Its particular localization suggests a role in the translocation of auxin towards the elongation zone. Recrutes NPY proteins (e.g. NPY1/MAB4 and NPY5/MEL1) to the plasma membrane in a polar basal localization in root epidermis; this activity is optimized by AGC kinases-mediated (e.g. D6PK and PID) phosphorylation that limits their lateral diffusion-based escape. The sequence is that of Auxin efflux carrier component 2 from Arabidopsis thaliana (Mouse-ear cress).